Consider the following 130-residue polypeptide: Phosphoribosyl-AMP cyclohydrolase (130 aa).

Position 77 (Asp-77) interacts with Mg(2+). Cys-78 is a binding site for Zn(2+). Mg(2+) is bound by residues Asp-79 and Asp-81. Zn(2+)-binding residues include Cys-95 and Cys-102.

The protein belongs to the PRA-CH family. In terms of assembly, homodimer. Mg(2+) serves as cofactor. It depends on Zn(2+) as a cofactor.

It is found in the cytoplasm. The catalysed reaction is 1-(5-phospho-beta-D-ribosyl)-5'-AMP + H2O = 1-(5-phospho-beta-D-ribosyl)-5-[(5-phospho-beta-D-ribosylamino)methylideneamino]imidazole-4-carboxamide. It functions in the pathway amino-acid biosynthesis; L-histidine biosynthesis; L-histidine from 5-phospho-alpha-D-ribose 1-diphosphate: step 3/9. Catalyzes the hydrolysis of the adenine ring of phosphoribosyl-AMP. This Pseudomonas putida (strain GB-1) protein is Phosphoribosyl-AMP cyclohydrolase.